A 250-amino-acid polypeptide reads, in one-letter code: Formylaminopyrimidine transport permease protein ThiX (250 aa).

6 helical membrane passes run 5 to 25, 62 to 82, 94 to 114, 115 to 135, 172 to 192, and 216 to 236; these read YQALEPTLFFLMLMVIWEISA, IISIGLALSIVLGILLSLLMF, LLVASQTIPVIALAPIFVLWF, GYSIWSKVAVTVLLTFFPITV, LPSFLTGLRIAVPLAVIGAAV, and PGVFAPIFILSLLGILGFAAI. In terms of domain architecture, ABC transmembrane type-1 spans 56-237; the sequence is LPATLAIISI…LGILGFAAIK (182 aa).

It belongs to the binding-protein-dependent transport system permease family. As to quaternary structure, the complex is likely composed of an ATP-binding protein (ThiZ), a transmembrane protein (ThiX) and a solute-binding protein (ThiY).

Its subcellular location is the cell membrane. Its pathway is cofactor biosynthesis; thiamine diphosphate biosynthesis. Its function is as follows. Participates in a thiamine pyrimidine salvage pathway as part of the ABC transporter complex ThiXYZ involved in the import of thiamine degradation products such as the formylaminopyrimidine N-formyl-4-amino-5-aminomethyl-2-methylpyrimidine (FAMP). Is probably responsible for the translocation of the substrate across the membrane. This Halalkalibacterium halodurans (strain ATCC BAA-125 / DSM 18197 / FERM 7344 / JCM 9153 / C-125) (Bacillus halodurans) protein is Formylaminopyrimidine transport permease protein ThiX.